Here is a 61-residue protein sequence, read N- to C-terminus: Small ribosomal subunit protein uS14 (61 aa).

Cys24, Cys27, Cys40, and Cys43 together coordinate Zn(2+).

It belongs to the universal ribosomal protein uS14 family. Zinc-binding uS14 subfamily. In terms of assembly, part of the 30S ribosomal subunit. Contacts proteins S3 and S10. Zn(2+) is required as a cofactor.

Its function is as follows. Binds 16S rRNA, required for the assembly of 30S particles and may also be responsible for determining the conformation of the 16S rRNA at the A site. The sequence is that of Small ribosomal subunit protein uS14 from Leptospira biflexa serovar Patoc (strain Patoc 1 / Ames).